A 102-amino-acid polypeptide reads, in one-letter code: Putative sortase YwpE (102 aa).

H17 functions as the Proton donor/acceptor in the catalytic mechanism. Catalysis depends on C78, which acts as the Acyl-thioester intermediate.

Belongs to the bacterial sortase family.

Functionally, seems not to play a major role if any as a sortase. This is Putative sortase YwpE (ywpE) from Bacillus subtilis (strain 168).